Here is a 636-residue protein sequence, read N- to C-terminus: Putative lipase ATG15 (636 aa).

Topologically, residues 1 to 19 (MYKYGTVVDPAMTTNRRSR) are cytoplasmic. A helical; Signal-anchor for type II membrane protein membrane pass occupies residues 20–42 (LSGFRCASTARVTATLLLSFLAF). Topologically, residues 43 to 636 (SPSSASSDFG…DDLEFATDEM (594 aa)) are lumenal. N-linked (GlcNAc...) asparagine glycosylation is found at N211, N233, N291, N315, and N477. Residues 478-500 (GTETTTTSSPSTTSTTRTRTRTS) are disordered. The segment covering 479 to 500 (TETTTTSSPSTTSTTRTRTRTS) has biased composition (low complexity).

The protein belongs to the AB hydrolase superfamily. Lipase family. As to quaternary structure, binds to both phosphatidylinositol (PI) and phosphatidylinositol 3,5-bisphosphate (PIP2).

Its subcellular location is the endosome. It localises to the multivesicular body membrane. The protein localises to the prevacuolar compartment membrane. It catalyses the reaction a triacylglycerol + H2O = a diacylglycerol + a fatty acid + H(+). In terms of biological role, lipase which is essential for lysis of subvacuolar cytoplasm to vacuole targeted bodies and intravacuolar autophagic bodies. Involved in the lysis of intravacuolar multivesicular body (MVB) vesicles. The intravacuolar membrane disintegration by ATG15 is critical to life span extension. Autophagy is required for proper vegetative growth, asexual/sexual reproduction, and full virulence. Autophagy is particularly involved in the biosynthesis of deoxynivalenol (DON), an important virulence determinant. This chain is Putative lipase ATG15, found in Gibberella zeae (strain ATCC MYA-4620 / CBS 123657 / FGSC 9075 / NRRL 31084 / PH-1) (Wheat head blight fungus).